Reading from the N-terminus, the 389-residue chain is Apicidin F cluster transcription factor apf2 (389 aa).

Composition is skewed to polar residues over residues 1 to 13 (MSPP…TITD) and 75 to 84 (PDSATPKPSL). 3 disordered regions span residues 1 to 27 (MSPP…VAQR), 65 to 84 (PQSV…KPSL), and 219 to 239 (EVPN…TKQP). A basic DNA-binding region region spans residues 12-38 (TDANERRKAQNRVAQRNYRSRQKLRVE). 4 ANK repeats span residues 241–270 (EFKT…NIDT), 274–303 (HGRT…DLLM), 307–336 (SGVT…QQDR), and 357–386 (QNMT…DVNI).

This sequence belongs to the bZIP family. Highly divergent.

It is found in the nucleus. Transcription factor that regulates the expression of the gene cluster that mediates the biosynthesis of apicidin F. Binds to the eight-base-pair motif 5'-TGACGTGA-3' called the 'Api-box' that is found in all promoters of the apicidin F cluster except in the promoter region of apf2 itself. The chain is Apicidin F cluster transcription factor apf2 from Gibberella fujikuroi (strain CBS 195.34 / IMI 58289 / NRRL A-6831) (Bakanae and foot rot disease fungus).